The primary structure comprises 205 residues: Protein TK0174 (205 aa).

The AMMECR1 domain maps to 7–201; that stretch reads EWGEFLVRLA…EEYPRGPVRR (195 aa).

The protein is Protein TK0174 of Thermococcus kodakarensis (strain ATCC BAA-918 / JCM 12380 / KOD1) (Pyrococcus kodakaraensis (strain KOD1)).